Consider the following 301-residue polypeptide: Homoserine O-acetyltransferase (301 aa).

The active-site Acyl-thioester intermediate is C142. Substrate contacts are provided by K163 and S192. H235 (proton acceptor) is an active-site residue. E237 is a catalytic residue. Residue R249 participates in substrate binding.

The protein belongs to the MetA family.

It is found in the cytoplasm. It carries out the reaction L-homoserine + acetyl-CoA = O-acetyl-L-homoserine + CoA. Its pathway is amino-acid biosynthesis; L-methionine biosynthesis via de novo pathway; O-acetyl-L-homoserine from L-homoserine: step 1/1. Transfers an acetyl group from acetyl-CoA to L-homoserine, forming acetyl-L-homoserine. In Bacillus cereus (strain ATCC 14579 / DSM 31 / CCUG 7414 / JCM 2152 / NBRC 15305 / NCIMB 9373 / NCTC 2599 / NRRL B-3711), this protein is Homoserine O-acetyltransferase.